The following is an 891-amino-acid chain: Aconitate hydratase A (891 aa).

Cys-435, Cys-501, and Cys-504 together coordinate [4Fe-4S] cluster.

Belongs to the aconitase/IPM isomerase family. Monomer. Requires [4Fe-4S] cluster as cofactor.

The catalysed reaction is citrate = D-threo-isocitrate. The enzyme catalyses (2S,3R)-3-hydroxybutane-1,2,3-tricarboxylate = 2-methyl-cis-aconitate + H2O. It functions in the pathway carbohydrate metabolism; tricarboxylic acid cycle; isocitrate from oxaloacetate: step 2/2. Its pathway is organic acid metabolism; propanoate degradation. Involved in the catabolism of short chain fatty acids (SCFA) via the tricarboxylic acid (TCA)(acetyl degradation route) and the 2-methylcitrate cycle I (propionate degradation route). Catalyzes the reversible isomerization of citrate to isocitrate via cis-aconitate. Also catalyzes the hydration of 2-methyl-cis-aconitate to yield (2R,3S)-2-methylisocitrate. The (2S,3S)-2-methylcitrate (2-MC) is a very poor substrate. The apo form of AcnA functions as a RNA-binding regulatory protein. The chain is Aconitate hydratase A (acnA) from Salmonella typhimurium (strain LT2 / SGSC1412 / ATCC 700720).